Consider the following 123-residue polypeptide: Large ribosomal subunit protein uL29 (123 aa).

It belongs to the universal ribosomal protein uL29 family.

The sequence is that of Large ribosomal subunit protein uL29 (RPL35) from Theileria lestoquardi.